We begin with the raw amino-acid sequence, 685 residues long: MSYASLSVKDLTSLVSRSGTGSSSSLKPPGQTRPVKVIPLQHPDTSNEARPPSIPFDDIFSGWTAKIKRMRLVDWIDTLFPCFRWIRTYRWSEYFKLDLMAGITVGIMLVPQAMSYAKLAGLPPIYGLYSSFVPVFVYAIFGSSRQLAIGPVALVSLLVSNALGGIADTNEELHIELAILLALLVGILECIMGLLRLGWLIRFISHSVISGFTSASAIVIGLSQIKYFLGYSIARSSKIVPIVESIIAGADKFQWPPFVMGSLILVILQVMKHVGKAKKELQFLRAAAPLTGIVLGTTIAKVFHPPSISLVGEIPQGLPTFSFPRSFDHAKTLLPTSALITGVAILESVGIAKALAAKNRYELDSNSELFGLGVANILGSLFSAYPATGSFSRSAVNNESEAKTGLSGLITGIIIGCSLLFLTPMFKYIPQCALAAIVISAVSGLVDYDEAIFLWRVDKRDFSLWTITSTITLFFGIEIGVLVGVGFSLAFVIHESANPHIAVLGRLPGTTVYRNIKQYPEAYTYNGIVIVRIDSPIYFANISYIKDRLREYEVAVDKYTNRGLEVDRINFVILEMSPVTHIDSSAVEALKELYQEYKTRDIQLAISNPNKDVHLTIARSGMVELVGKEWFFVRVHDAVQVCLQYVQSSNLEDKHLSFTRRYGGSNNNSSSSNALLKEPLLSVEK.

The transit peptide at 1–23 directs the protein to the chloroplast; the sequence is MSYASLSVKDLTSLVSRSGTGSS. Residues 15 to 26 are compositionally biased toward low complexity; that stretch reads VSRSGTGSSSSL. The disordered stretch occupies residues 15–53; the sequence is VSRSGTGSSSSLKPPGQTRPVKVIPLQHPDTSNEARPPS. The next 12 membrane-spanning stretches (helical) occupy residues 97-117, 122-142, 147-167, 175-195, 203-223, 255-275, 283-303, 332-352, 369-389, 406-426, 434-454, and 473-493; these read LDLMAGITVGIMLVPQAMSYA, LPPIYGLYSSFVPVFVYAIFG, LAIGPVALVSLLVSNALGGIA, IELAILLALLVGILECIMGLL, FISHSVISGFTSASAIVIGLS, WPPFVMGSLILVILQVMKHVG, FLRAAAPLTGIVLGTTIAKVF, TLLPTSALITGVAILESVGIA, LFGLGVANILGSLFSAYPATG, LSGLITGIIIGCSLLFLTPMF, LAAIVISAVSGLVDYDEAIFL, and LFFGIEIGVLVGVGFSLAFVI. In terms of domain architecture, STAS spans 518-642; that stretch reads QYPEAYTYNG…VRVHDAVQVC (125 aa).

This sequence belongs to the SLC26A/SulP transporter (TC 2.A.53) family. Expressed both in roots and leaves.

It is found in the plastid. The protein localises to the chloroplast membrane. Its function is as follows. H(+)/sulfate cotransporter that may play a role in the regulation of sulfate assimilation. The chain is Sulfate transporter 4.1, chloroplastic (SULTR4;1) from Arabidopsis thaliana (Mouse-ear cress).